The sequence spans 541 residues: Tegument protein UL21 homolog (541 aa).

It belongs to the alphaherpesvirinae UL21 protein family. In terms of assembly, interacts (via C-terminus) with UL16.

The protein localises to the virion tegument. It localises to the host cytoplasm. The protein resides in the host nucleus. Its function is as follows. May participate in DNA packaging/capsid maturation events. Promotes efficient incorporation of tegument proteins UL46, UL49, and US3 homologs into virions. May also play a role in capsid transport to the trans-Golgi network (TGN). This is Tegument protein UL21 homolog from Varicella-zoster virus (strain Oka vaccine) (HHV-3).